The following is a 384-amino-acid chain: L-cysteine:1D-myo-inositol 2-amino-2-deoxy-alpha-D-glucopyranoside ligase (384 aa).

Cys16 lines the Zn(2+) pocket. L-cysteinyl-5'-AMP contacts are provided by residues 16–19, Thr31, and 54–56; these read CGIT and NVT. The 'HIGH' region motif lies at 18–28; the sequence is ITPYDATHLGH. The 'ERGGDP' region signature appears at 159-164; the sequence is QSGGDP. Trp199 contacts L-cysteinyl-5'-AMP. Position 203 (Cys203) interacts with Zn(2+). Residue 221–223 participates in L-cysteinyl-5'-AMP binding; the sequence is GSD. Position 228 (His228) interacts with Zn(2+). Ile255 is a binding site for L-cysteinyl-5'-AMP. The 'KMSKS' region signature appears at 261–265; it reads KMSKS.

It belongs to the class-I aminoacyl-tRNA synthetase family. MshC subfamily. In terms of assembly, monomer. The cofactor is Zn(2+).

It carries out the reaction 1D-myo-inositol 2-amino-2-deoxy-alpha-D-glucopyranoside + L-cysteine + ATP = 1D-myo-inositol 2-(L-cysteinylamino)-2-deoxy-alpha-D-glucopyranoside + AMP + diphosphate + H(+). Catalyzes the ATP-dependent condensation of GlcN-Ins and L-cysteine to form L-Cys-GlcN-Ins. In Mycobacterium leprae (strain Br4923), this protein is L-cysteine:1D-myo-inositol 2-amino-2-deoxy-alpha-D-glucopyranoside ligase.